Here is a 362-residue protein sequence, read N- to C-terminus: 2-oxoglutarate-dependent dioxygenase lolO2 (362 aa).

Residues 199 to 312 (TWNYFLGQPV…RYSLVFFGHL (114 aa)) enclose the Fe2OG dioxygenase domain. Fe cation contacts are provided by His222, Asp224, and His280. Residue Arg303 participates in 2-oxoglutarate binding.

Belongs to the iron/ascorbate-dependent oxidoreductase family. It depends on Fe(2+) as a cofactor.

Its pathway is alkaloid biosynthesis. In terms of biological role, 2-oxoglutarate-dependent dioxygenase; part of the gene cluster that mediates the biosynthesis of loline alkaloids, potent insecticidal agents composed of a pyrrolizidine ring system and an uncommon ether bridge linking carbons 2 and 7. Lolines are structurally differentiated by the various modifications of the L-amino group and include norloline, loline, N-methylloline, N-acetylloline, N-acetylnorloline, and N-formylloline. The first committed step is the condensation of O-acetyl-L-homoserine (derived from L-aspartic acid) and L-proline, probably catalyzed by the gamma-type pyridoxal 5'-phosphate(PLP)-dependent enzyme lolC, to give the diamino diacid, NACPP. Ensuing cyclization, decarboxylation, and acetylation steps yield 1-exo-acetamidopyrrolizidine (AcAP). LolO is required for installation of the ether bridge upon the pathway intermediate, 1-exo-acetamidopyrrolizidine (AcAP). In sequential 2-oxoglutarate- and O(2)-consuming steps, lolO removes hydrogens from C2 and C7 of AcAP to form both carbon-oxygen bonds in N-acetylnorloline (NANL), the precursor to all other lolines. The enzymes lolD, lolE, lolF and lolT have also been proposed to be involved in the ether-bridge installation. Further processing of the exocyclic moiety of NANL by fungal N-acetamidase (LolN), methyltransferase (LolM), and cytochrome P450 (LolP) enzymes, with occasional involvement of a plant acetyltransferase, generates the other known lolines. LolN transforms NANL to norlonine which is monomethylated and dimethylated to respectively lonine and N-methyllonine (NML) by lolM. LolP catalyzes hydroxylation of the methyl group in N-methylloline (NML) and further oxygenation to N-formylloline (NFL). A plant acetyltransferase is responsible for the acetylation of loline to form N-acetylloline (NAL). LolA might interact with aspartate kinase to prevent feedback inhibition of its activity by these end products and thereby promote production of L-homoserine from L-aspartate. This is 2-oxoglutarate-dependent dioxygenase lolO2 from Epichloe uncinata (Endophyte fungus).